We begin with the raw amino-acid sequence, 444 residues long: UDP-N-acetylglucosamine 1-carboxyvinyltransferase (444 aa).

22-23 (KN) is a binding site for phosphoenolpyruvate. Arg-94 contributes to the UDP-N-acetyl-alpha-D-glucosamine binding site. Asp-119 acts as the Proton donor in catalysis. The UDP-N-acetyl-alpha-D-glucosamine site is built by Asp-309 and Val-331.

It belongs to the EPSP synthase family. MurA subfamily.

It is found in the cytoplasm. It catalyses the reaction phosphoenolpyruvate + UDP-N-acetyl-alpha-D-glucosamine = UDP-N-acetyl-3-O-(1-carboxyvinyl)-alpha-D-glucosamine + phosphate. It participates in cell wall biogenesis; peptidoglycan biosynthesis. Cell wall formation. Adds enolpyruvyl to UDP-N-acetylglucosamine. The chain is UDP-N-acetylglucosamine 1-carboxyvinyltransferase from Chlamydia abortus (strain DSM 27085 / S26/3) (Chlamydophila abortus).